The primary structure comprises 408 residues: NADH-quinone oxidoreductase subunit D (408 aa).

The protein belongs to the complex I 49 kDa subunit family. In terms of assembly, NDH-1 is composed of 14 different subunits. Subunits NuoB, C, D, E, F, and G constitute the peripheral sector of the complex.

It localises to the cell inner membrane. The catalysed reaction is a quinone + NADH + 5 H(+)(in) = a quinol + NAD(+) + 4 H(+)(out). NDH-1 shuttles electrons from NADH, via FMN and iron-sulfur (Fe-S) centers, to quinones in the respiratory chain. The immediate electron acceptor for the enzyme in this species is believed to be ubiquinone. Couples the redox reaction to proton translocation (for every two electrons transferred, four hydrogen ions are translocated across the cytoplasmic membrane), and thus conserves the redox energy in a proton gradient. In Campylobacter hominis (strain ATCC BAA-381 / DSM 21671 / CCUG 45161 / LMG 19568 / NCTC 13146 / CH001A), this protein is NADH-quinone oxidoreductase subunit D.